A 350-amino-acid polypeptide reads, in one-letter code: S-adenosylmethionine:tRNA ribosyltransferase-isomerase (350 aa).

The protein belongs to the QueA family. In terms of assembly, monomer.

It is found in the cytoplasm. It catalyses the reaction 7-aminomethyl-7-carbaguanosine(34) in tRNA + S-adenosyl-L-methionine = epoxyqueuosine(34) in tRNA + adenine + L-methionine + 2 H(+). The protein operates within tRNA modification; tRNA-queuosine biosynthesis. Its function is as follows. Transfers and isomerizes the ribose moiety from AdoMet to the 7-aminomethyl group of 7-deazaguanine (preQ1-tRNA) to give epoxyqueuosine (oQ-tRNA). The protein is S-adenosylmethionine:tRNA ribosyltransferase-isomerase of Bacillus thuringiensis subsp. konkukian (strain 97-27).